The sequence spans 27 residues: Bombinin-like peptide 2 (27 aa).

Asparagine amide is present on N27.

It belongs to the bombinin family. In terms of tissue distribution, expressed by the skin glands.

The protein localises to the secreted. In terms of biological role, has antimicrobial activity, but no hemolytic activity. Preference on killing Gram-negative non-enteric bacteria. In Bombina orientalis (Oriental fire-bellied toad), this protein is Bombinin-like peptide 2.